Here is a 204-residue protein sequence, read N- to C-terminus: Holliday junction branch migration complex subunit RuvA (204 aa).

Positions 1–64 (MIAQLKGSLA…EDAFLLYGFH (64 aa)) are domain I. Residues 65-143 (SESQRKVFNL…ALPMAAPTTA (79 aa)) are domain II. Positions 144-154 (IGAATMAANPA) are flexible linker. Residues 154-204 (AGLREEVASALLNLGYKPPQVDAALAKLFSAGEITDISVALKGALKLLAPA) are domain III.

This sequence belongs to the RuvA family. As to quaternary structure, homotetramer. Forms an RuvA(8)-RuvB(12)-Holliday junction (HJ) complex. HJ DNA is sandwiched between 2 RuvA tetramers; dsDNA enters through RuvA and exits via RuvB. An RuvB hexamer assembles on each DNA strand where it exits the tetramer. Each RuvB hexamer is contacted by two RuvA subunits (via domain III) on 2 adjacent RuvB subunits; this complex drives branch migration. In the full resolvosome a probable DNA-RuvA(4)-RuvB(12)-RuvC(2) complex forms which resolves the HJ.

It localises to the cytoplasm. Its function is as follows. The RuvA-RuvB-RuvC complex processes Holliday junction (HJ) DNA during genetic recombination and DNA repair, while the RuvA-RuvB complex plays an important role in the rescue of blocked DNA replication forks via replication fork reversal (RFR). RuvA specifically binds to HJ cruciform DNA, conferring on it an open structure. The RuvB hexamer acts as an ATP-dependent pump, pulling dsDNA into and through the RuvAB complex. HJ branch migration allows RuvC to scan DNA until it finds its consensus sequence, where it cleaves and resolves the cruciform DNA. This chain is Holliday junction branch migration complex subunit RuvA, found in Magnetococcus marinus (strain ATCC BAA-1437 / JCM 17883 / MC-1).